A 217-amino-acid polypeptide reads, in one-letter code: MSGAGAIAAASVGCLRTGVPRPFSAYGRGLIIRCHSTGMTLDNINRAAVDQIIRVDHAGEYGANRIYAGQMAVLGRTSVGPVIQKMWDQEKNHLKKFNELMVAFRVRPTVLMPLWNVAGFALGAGTALLGKEGAMACTVAVEESIAHHYNNQIRMLMEEDAEKYEELLQVIKQFRDEELEHHDTGLEHDAELAPAYTLLKRLIQAGCSAAIYLSERF.

2 tandem repeats follow at residues Ala48 to Leu129 and Gly130 to Phe217. The segment at Ala48 to Phe217 is 2 X approximate tandem repeats. Residues Glu60, Glu90, His93, Glu142, Glu178, and His181 each contribute to the Fe cation site. NADH-binding residues include Tyr212 and Arg216.

This sequence belongs to the COQ7 family. As to quaternary structure, component of a multi-subunit COQ enzyme complex. Interacts with COQ8B and COQ6. Interacts with COQ9. Fe cation serves as cofactor.

The protein localises to the mitochondrion inner membrane. It carries out the reaction a 5-methoxy-2-methyl-3-(all-trans-polyprenyl)benzoquinone + NADH + O2 = a 3-demethylubiquinone + NAD(+) + H2O. It functions in the pathway cofactor biosynthesis; ubiquinone biosynthesis. In terms of biological role, catalyzes the hydroxylation of the 5-methoxy-2-methyl-3-(all-trans-polyprenyl)benzoquinone at the C6 position and participates in the biosynthesis of ubiquinone. Catalyzes the reaction through a substrate-mediated reduction pathway, whereby NADH shuttles electrons to 5-methoxy-2-methyl-3-(all-trans-decaprenyl)benzoquinone, which then transfers the electrons to the two Fe(3+) centers. The binding of 5-methoxy-2-methyl-3-(all-trans-polyprenyl)benzoquinone (DMQn) mediates reduction of the diiron center by nicotinamide adenine dinucleotide (NADH) and initiates oxygen activation for subsequent DMQ hydroxylation. The physiological substrates are 5-methoxy-2-methyl-3-(all-trans-nonaprenyl)benzoquinone (DMQ(9)) and 5-methoxy-2-methyl-3-(all-trans-decaprenyl)benzoquinone (DMQ(10)), however in vitro the enzyme does not have any specificity concerning the length of the polyprenyl tail, and accepts tails of various lengths with similar efficiency. Also has a structural role in the COQ enzyme complex, stabilizing other COQ polypeptides. Involved in lifespan determination in a ubiquinone-independent manner. Plays a role in modulating mitochondrial stress responses, acting in the nucleus, perhaps via regulating gene expression, independent of its characterized mitochondrial function in ubiquinone biosynthesis. This chain is NADPH-dependent 3-demethoxyubiquinone 3-hydroxylase, mitochondrial, found in Rattus norvegicus (Rat).